Here is a 334-residue protein sequence, read N- to C-terminus: Transmembrane protein 41 homolog (334 aa).

Asparagine 43 carries N-linked (GlcNAc...) asparagine glycosylation. The disordered stretch occupies residues 47-79 (KNKNNNIDNKKNSNNNNNNNNNNNNKNSISNNN). N-linked (GlcNAc...) asparagine glycosylation occurs at asparagine 83. Helical transmembrane passes span 97–117 (LPLW…VFLF), 156–176 (FIVI…SIPG), 192–214 (VGFP…ISYY), 246–266 (IVFL…ASPL), 269–289 (VPIH…TFLA), and 305–325 (IFDL…ILPT).

This sequence belongs to the TMEM41 family.

It is found in the membrane. This Dictyostelium discoideum (Social amoeba) protein is Transmembrane protein 41 homolog.